A 333-amino-acid chain; its full sequence is Phosphate acyltransferase (333 aa).

The protein belongs to the PlsX family. Homodimer. Probably interacts with PlsY.

It is found in the cytoplasm. The catalysed reaction is a fatty acyl-[ACP] + phosphate = an acyl phosphate + holo-[ACP]. It functions in the pathway lipid metabolism; phospholipid metabolism. Catalyzes the reversible formation of acyl-phosphate (acyl-PO(4)) from acyl-[acyl-carrier-protein] (acyl-ACP). This enzyme utilizes acyl-ACP as fatty acyl donor, but not acyl-CoA. The polypeptide is Phosphate acyltransferase (Enterococcus faecalis (strain ATCC 700802 / V583)).